The following is a 137-amino-acid chain: Small ribosomal subunit protein bS16 (137 aa).

Belongs to the bacterial ribosomal protein bS16 family.

In Leuconostoc citreum (strain KM20), this protein is Small ribosomal subunit protein bS16.